The sequence spans 275 residues: Phosphate import ATP-binding protein PstB 2 (275 aa).

Positions 29–270 (LEVKNLNIYY…PSEKKTEDYI (242 aa)) constitute an ABC transporter domain. 61–68 (GPSGCGKS) is an ATP binding site.

It belongs to the ABC transporter superfamily. Phosphate importer (TC 3.A.1.7) family. As to quaternary structure, the complex is composed of two ATP-binding proteins (PstB), two transmembrane proteins (PstC and PstA) and a solute-binding protein (PstS).

The protein localises to the cell membrane. The catalysed reaction is phosphate(out) + ATP + H2O = ADP + 2 phosphate(in) + H(+). Functionally, part of the ABC transporter complex PstSACB involved in phosphate import. Responsible for energy coupling to the transport system. The polypeptide is Phosphate import ATP-binding protein PstB 2 (Bacillus licheniformis (strain ATCC 14580 / DSM 13 / JCM 2505 / CCUG 7422 / NBRC 12200 / NCIMB 9375 / NCTC 10341 / NRRL NRS-1264 / Gibson 46)).